The chain runs to 115 residues: Large ribosomal subunit protein bL19 (115 aa).

It belongs to the bacterial ribosomal protein bL19 family.

Functionally, this protein is located at the 30S-50S ribosomal subunit interface and may play a role in the structure and function of the aminoacyl-tRNA binding site. The protein is Large ribosomal subunit protein bL19 of Streptococcus equi subsp. equi (strain 4047).